The primary structure comprises 328 residues: Tetraacyldisaccharide 4'-kinase (328 aa).

Residue 55–62 coordinates ATP; it reads TAGGNGKT.

Belongs to the LpxK family.

The catalysed reaction is a lipid A disaccharide + ATP = a lipid IVA + ADP + H(+). The protein operates within glycolipid biosynthesis; lipid IV(A) biosynthesis; lipid IV(A) from (3R)-3-hydroxytetradecanoyl-[acyl-carrier-protein] and UDP-N-acetyl-alpha-D-glucosamine: step 6/6. Its function is as follows. Transfers the gamma-phosphate of ATP to the 4'-position of a tetraacyldisaccharide 1-phosphate intermediate (termed DS-1-P) to form tetraacyldisaccharide 1,4'-bis-phosphate (lipid IVA). The protein is Tetraacyldisaccharide 4'-kinase of Yersinia pseudotuberculosis serotype I (strain IP32953).